The chain runs to 62 residues: Bacteriocin piscicolin-126 (62 aa).

Positions 1-18 (MKTVKELSVKEMQLTTGG) are excised as a propeptide. An intrachain disulfide couples C27 to C32.

Its subcellular location is the secreted. Inhibits the growth of several Gram-positive bacteria, especially the food-borne pathogen L.monocytogenes, but has no effect on the growth of a number of yeasts and Gram-negative bacteria. The protein is Bacteriocin piscicolin-126 (pisA) of Carnobacterium maltaromaticum (Carnobacterium piscicola).